The sequence spans 288 residues: MKAFLLSLATLLACIVLTESAPHSADVREEAFDALVRSYLQAVQRDSHMENLTCAECQGVTERNCTLGERQVQCNPGEVCTTLEAFNLDTGTTTVTRGCFNITGLNCGDNPGCGALNTTGNIQSCDQFCCNTSLCNAGTLTTVTPQTTDGNTTTEAPTSTEPPTNASTEAPTSTEPPTNASTEAPTSTEPPTNASTEAPTTTEAPTTTEAPTTTEAPTTTETPTTTETPTTTAAPTTTETPTTTAAPTTTPAPTTTPAPTTPFFCNATLAGLSGTFTSPNFQLITQTG.

The first 20 residues, 1–20, serve as a signal peptide directing secretion; sequence MKAFLLSLATLLACIVLTES. Polar residues predominate over residues 141–150; that stretch reads TTVTPQTTDG. The segment at 141 to 260 is disordered; it reads TTVTPQTTDG…PAPTTTPAPT (120 aa). Residues 151–253 show a composition bias toward low complexity; that stretch reads NTTTEAPTST…TAAPTTTPAP (103 aa).

In terms of tissue distribution, component of the acid-insoluble and acid-soluble organic matrix of the aragonitic skeleton (at protein level).

The protein resides in the secreted. The polypeptide is Threonine-rich protein (Acropora millepora (Staghorn coral)).